We begin with the raw amino-acid sequence, 248 residues long: Protein LIFEGUARD 3 (248 aa).

7 consecutive transmembrane segments (helical) span residues 42-62 (VYSI…TVVT), 74-94 (GLGL…LCPL), 105-125 (YLLL…TCAF), 130-150 (VILE…LYTF), 165-185 (FLFG…LFPL), 188-208 (VSVM…IVYD), and 222-242 (IWAA…LLTV).

This sequence belongs to the BI1 family.

The protein resides in the membrane. This chain is Protein LIFEGUARD 3, found in Arabidopsis thaliana (Mouse-ear cress).